A 227-amino-acid polypeptide reads, in one-letter code: DNA mismatch repair protein MutH (227 aa).

The protein belongs to the MutH family.

Its subcellular location is the cytoplasm. Sequence-specific endonuclease that cleaves unmethylated GATC sequences. It is involved in DNA mismatch repair. In Vibrio vulnificus (strain CMCP6), this protein is DNA mismatch repair protein MutH.